A 302-amino-acid polypeptide reads, in one-letter code: MKKDFISILDISREELANLIAHARKLKEERRVGIQTPVLAHKTLGMIFEKSSTRTRISFEAGMFELGGHALFLNPKDMQLGRGEAIRDTARVMSRFVSAIMIRANRHDEVLELAAHADIPVINGLSDREHPCQILADIMTIEERLFRTEGVKVAWIGDGNNVCTSLILSTILTGMEVIVASPSEFAPGEDVVSEALRMGAKVRIVTDPREAATGADVVMTDTWISMGQEEEIDRRRQIFMPYQVNAELMACAKPGAIVMHCLPAHRNWEITDEVLDSKASAVWDQAENRLHAQKALLVRLLA.

Residues 52 to 55 (STRT), Q79, R103, and 130 to 133 (HPCQ) each bind carbamoyl phosphate. Residues N161, D221, and 225–226 (SM) each bind L-ornithine. Residues 261-262 (CL) and R289 each bind carbamoyl phosphate.

The protein belongs to the aspartate/ornithine carbamoyltransferase superfamily. OTCase family.

Its subcellular location is the cytoplasm. It carries out the reaction carbamoyl phosphate + L-ornithine = L-citrulline + phosphate + H(+). The protein operates within amino-acid biosynthesis; L-arginine biosynthesis; L-arginine from L-ornithine and carbamoyl phosphate: step 1/3. Its function is as follows. Reversibly catalyzes the transfer of the carbamoyl group from carbamoyl phosphate (CP) to the N(epsilon) atom of ornithine (ORN) to produce L-citrulline. The sequence is that of Ornithine carbamoyltransferase from Methanospirillum hungatei JF-1 (strain ATCC 27890 / DSM 864 / NBRC 100397 / JF-1).